Here is a 593-residue protein sequence, read N- to C-terminus: Probable ubiquitin carboxyl-terminal hydrolase 4 (593 aa).

Positions 227–573 (IGLTNLGNTC…SSYILFYKRS (347 aa)) constitute a USP domain. Catalysis depends on cysteine 236, which acts as the Nucleophile. Phosphoserine is present on residues serine 338 and serine 343. The Proton acceptor role is filled by histidine 530.

The protein belongs to the peptidase C19 family. As to quaternary structure, interacts with sfp47.

It localises to the cytoplasm. It is found in the endosome. It catalyses the reaction Thiol-dependent hydrolysis of ester, thioester, amide, peptide and isopeptide bonds formed by the C-terminal Gly of ubiquitin (a 76-residue protein attached to proteins as an intracellular targeting signal).. Functionally, has an ATP-independent isopeptidase activity, cleaving at the C-terminus of the ubiquitin moiety. Acts late in the proteolytic pathway in conjunction with the 26S proteasome. Plays a role in avoiding DNA overreplication. The sequence is that of Probable ubiquitin carboxyl-terminal hydrolase 4 (ubp4) from Schizosaccharomyces pombe (strain 972 / ATCC 24843) (Fission yeast).